We begin with the raw amino-acid sequence, 34 residues long: NKGCATCSIGIACLVDGPIPDFECAGATGLGLWG.

A cross-link (cyclopeptide (Asn-Gly)) is located at residues 1–34; it reads NKGCATCSIGIACLVDGPIPDFECAGATGLGLWG. The 2-cysteinyl-D-allo-threonine (Cys-Thr) cross-link spans 7–28; it reads CSIGIACLVDGPIPDFECAGAT. A cross-link (2-cysteinyl-L-phenylalanine (Cys-Phe)) is located at residues 13-22; it reads CLVDGPIPDF.

The protein belongs to the bacteriocin class V family. Post-translationally, alpha-amino of Asn-1 is covalently linked with the carboxyl of Gly-34 to form a cyclopeptide. Thioether cross-links are formed between cysteines and the alpha-carbons of other amino acids, Cys-7 to Thr-28 and Cys-13 to Phe-22. In forming this cross-link, Thr-28 is converted to D-amino acid.

It localises to the secreted. In terms of biological role, has bactericidal activity against some Gram-positive bacteria. The chain is Subtilosin-A from Cytobacillus firmus (Bacillus firmus).